The sequence spans 106 residues: Small ribosomal subunit protein uS10 (106 aa).

It belongs to the universal ribosomal protein uS10 family. In terms of assembly, part of the 30S ribosomal subunit.

Its function is as follows. Involved in the binding of tRNA to the ribosomes. The polypeptide is Small ribosomal subunit protein uS10 (Prochlorococcus marinus (strain MIT 9211)).